Here is a 398-residue protein sequence, read N- to C-terminus: Dual-specificity RNA methyltransferase RlmN (398 aa).

Glu100 (proton acceptor) is an active-site residue. Residues 106–345 (DGDRGTLCVS…TTVRTTRGDD (240 aa)) form the Radical SAM core domain. A disulfide bridge connects residues Cys113 and Cys350. [4Fe-4S] cluster-binding residues include Cys120, Cys124, and Cys127. S-adenosyl-L-methionine is bound by residues 174-175 (GE), Ser206, 228-230 (SLH), and Asn307. Cys350 functions as the S-methylcysteine intermediate in the catalytic mechanism.

Belongs to the radical SAM superfamily. RlmN family. [4Fe-4S] cluster serves as cofactor.

Its subcellular location is the cytoplasm. It catalyses the reaction adenosine(2503) in 23S rRNA + 2 reduced [2Fe-2S]-[ferredoxin] + 2 S-adenosyl-L-methionine = 2-methyladenosine(2503) in 23S rRNA + 5'-deoxyadenosine + L-methionine + 2 oxidized [2Fe-2S]-[ferredoxin] + S-adenosyl-L-homocysteine. It carries out the reaction adenosine(37) in tRNA + 2 reduced [2Fe-2S]-[ferredoxin] + 2 S-adenosyl-L-methionine = 2-methyladenosine(37) in tRNA + 5'-deoxyadenosine + L-methionine + 2 oxidized [2Fe-2S]-[ferredoxin] + S-adenosyl-L-homocysteine. Specifically methylates position 2 of adenine 2503 in 23S rRNA and position 2 of adenine 37 in tRNAs. m2A2503 modification seems to play a crucial role in the proofreading step occurring at the peptidyl transferase center and thus would serve to optimize ribosomal fidelity. This chain is Dual-specificity RNA methyltransferase RlmN, found in Saccharophagus degradans (strain 2-40 / ATCC 43961 / DSM 17024).